Here is a 309-residue protein sequence, read N- to C-terminus: tRNA hydroxylation protein P2 (309 aa).

Belongs to the peptidase U32 family.

Involved in prephenate-dependent formation of 5-hydroxyuridine (ho5U) modification at position 34 in tRNAs, the first step in 5-methoxyuridine (mo5U) biosynthesis. This Bacillus subtilis (strain 168) protein is tRNA hydroxylation protein P2.